We begin with the raw amino-acid sequence, 499 residues long: Spore germination protein GerQA (499 aa).

Transmembrane regions (helical) follow at residues 285–305, 376–396, and 409–429; these read LFAFIFSVLTTPLYVSILTYH, SNVLIIIVALSALSSFTAPIY, and FIISAHLLGLLGIVLTSSLLL.

It belongs to the GerABKA family.

It is found in the membrane. Required for the germination response to inosine. Has no role in L-alanine germination. This is Spore germination protein GerQA (gerQA) from Bacillus cereus.